The sequence spans 278 residues: Orotidine 5'-phosphate decarboxylase (278 aa).

Lys96 acts as the Proton donor in catalysis.

Belongs to the OMP decarboxylase family. Type 2 subfamily.

The catalysed reaction is orotidine 5'-phosphate + H(+) = UMP + CO2. Its pathway is pyrimidine metabolism; UMP biosynthesis via de novo pathway; UMP from orotate: step 2/2. This is Orotidine 5'-phosphate decarboxylase (pyrF) from Streptomyces coelicolor (strain ATCC BAA-471 / A3(2) / M145).